Reading from the N-terminus, the 228-residue chain is Immunogenic protein MPB64 (228 aa).

The N-terminal stretch at 1–23 (MRIKIFMLVTAVVLLCCSGVATA) is a signal peptide.

It belongs to the RsiV family.

It localises to the secreted. The chain is Immunogenic protein MPB64 (mpb64) from Mycobacterium bovis (strain ATCC BAA-935 / AF2122/97).